The primary structure comprises 263 residues: Ribosomal RNA large subunit methyltransferase E (263 aa).

S-adenosyl-L-methionine is bound by residues glycine 50, tryptophan 52, aspartate 68, asparagine 84, and aspartate 109. Lysine 149 serves as the catalytic Proton acceptor. A TRAM domain is found at 196–254 (PLRKGDKFVVDIEKLGSSGDGAVLIEGFVVFVKEVEVGEKVRIKITDVKPNFAFADVAE).

This sequence belongs to the class I-like SAM-binding methyltransferase superfamily. RNA methyltransferase RlmE family.

It localises to the cytoplasm. It carries out the reaction uridine(2552) in 23S rRNA + S-adenosyl-L-methionine = 2'-O-methyluridine(2552) in 23S rRNA + S-adenosyl-L-homocysteine + H(+). Specifically methylates the uridine in position 2552 of 23S rRNA at the 2'-O position of the ribose in the fully assembled 50S ribosomal subunit. The sequence is that of Ribosomal RNA large subunit methyltransferase E from Methanosarcina barkeri (strain Fusaro / DSM 804).